Here is a 254-residue protein sequence, read N- to C-terminus: tRNA (guanine-N(1)-)-methyltransferase (254 aa).

Residues G121 and 141–146 (LGDYVL) each bind S-adenosyl-L-methionine.

It belongs to the RNA methyltransferase TrmD family. Homodimer.

Its subcellular location is the cytoplasm. It carries out the reaction guanosine(37) in tRNA + S-adenosyl-L-methionine = N(1)-methylguanosine(37) in tRNA + S-adenosyl-L-homocysteine + H(+). Specifically methylates guanosine-37 in various tRNAs. In Psychrobacter cryohalolentis (strain ATCC BAA-1226 / DSM 17306 / VKM B-2378 / K5), this protein is tRNA (guanine-N(1)-)-methyltransferase.